The following is a 222-amino-acid chain: Phosphoglycolate phosphatase (222 aa).

D8 serves as the catalytic Nucleophile. Mg(2+)-binding residues include D8 and D10. A substrate-binding site is contributed by K146. Residues D169 and D173 each contribute to the Mg(2+) site.

It belongs to the archaeal SPP-like hydrolase family. Mg(2+) is required as a cofactor.

It carries out the reaction 2-phosphoglycolate + H2O = glycolate + phosphate. Functionally, catalyzes the dephosphorylation of 2-phosphoglycolate. The protein is Phosphoglycolate phosphatase of Methanothrix thermoacetophila (strain DSM 6194 / JCM 14653 / NBRC 101360 / PT) (Methanosaeta thermophila).